Consider the following 529-residue polypeptide: UDP-glucuronosyltransferase 2B23 (529 aa).

An N-terminal signal peptide occupies residues 1–24 (MSVKWTSVILLIQLSFYFSSGSCG). Residues N67 and N68 are each glycosylated (N-linked (GlcNAc...) asparagine). The helical transmembrane segment at 494-514 (IGFLLACVATVIFIIMKCCLF) threads the bilayer.

Belongs to the UDP-glycosyltransferase family. Expressed in several tissues, including the prostate, mammary gland, epididymis, testis and ovary.

It localises to the microsome membrane. The protein resides in the endoplasmic reticulum membrane. The enzyme catalyses glucuronate acceptor + UDP-alpha-D-glucuronate = acceptor beta-D-glucuronoside + UDP + H(+). In terms of biological role, UDPGTs are of major importance in the conjugation and subsequent elimination of potentially toxic xenobiotics and endogenous compounds. This isozyme has glucuronidating capacity on 6 steroids and the bile acid, hyodeoxycholic acid. May potentially play an important role in estrogen and androgen catabolism in peripheral steroid target tissues. The chain is UDP-glucuronosyltransferase 2B23 (UGT2B23) from Macaca fascicularis (Crab-eating macaque).